The following is a 134-amino-acid chain: Z-ring associated protein G (134 aa).

Residues Glu-7–Val-27 form a helical membrane-spanning segment. Residues Ala-107 to Asn-134 form a disordered region. Residues Ser-111–Ser-120 are compositionally biased toward basic and acidic residues.

Belongs to the ZapG family.

The protein resides in the cell inner membrane. Involved in cell division, cell envelope biogenesis and cell shape maintenance. This Haemophilus influenzae (strain ATCC 51907 / DSM 11121 / KW20 / Rd) protein is Z-ring associated protein G.